We begin with the raw amino-acid sequence, 30 residues long: Kalata-B16 (30 aa).

The segment at residues 1–30 (GIPCAESCVYIPCTITALLGCKCQDKVCYD) is a cross-link (cyclopeptide (Gly-Asp)). 3 cysteine pairs are disulfide-bonded: C4-C21, C8-C23, and C13-C28.

Post-translationally, this is a cyclic peptide.

Its function is as follows. Probably participates in a plant defense mechanism. In Oldenlandia affinis, this protein is Kalata-B16.